A 148-amino-acid polypeptide reads, in one-letter code: Lysozyme-like protein 6 (148 aa).

The N-terminal stretch at 1 to 19 (MTKALLIYLVSSFLALNQA) is a signal peptide. The 129-residue stretch at 20–148 (SLISRCDLAQ…FYWLTGCRLR (129 aa)) folds into the C-type lysozyme domain. Intrachain disulfides connect cysteine 25-cysteine 145, cysteine 49-cysteine 133, cysteine 83-cysteine 98, and cysteine 94-cysteine 112. Residues glutamate 54 and aspartate 71 contribute to the active site.

It belongs to the glycosyl hydrolase 22 family. Monomer. In terms of tissue distribution, expressed in testis, epididymis and spermatozoa (at protein level). Expressed in late-stage spermatocytes and round spermatids.

It is found in the secreted. The protein localises to the cell surface. The protein resides in the cell projection. Its subcellular location is the cilium. It localises to the flagellum. It catalyses the reaction Hydrolysis of (1-&gt;4)-beta-linkages between N-acetylmuramic acid and N-acetyl-D-glucosamine residues in a peptidoglycan and between N-acetyl-D-glucosamine residues in chitodextrins.. Functionally, may be involved sperm-egg plasma membrane adhesion and fusion during fertilization. Exhibits bacteriolytic activity in vitro against Micrococcus luteus and Staphylococcus aureus. Shows weak bacteriolytic activity against Gram-positive bacteria at physiological pH. Bacteriolytic activity is pH-dependent, with a maximum at around pH 5.6. The protein is Lysozyme-like protein 6 (LYZL6) of Homo sapiens (Human).